Reading from the N-terminus, the 538-residue chain is Bifunctional purine biosynthesis protein PurH (538 aa).

Residues 6–158 form the MGS-like domain; sequence KHIPAPDLHR…KNHAYVATVV (153 aa).

This sequence belongs to the PurH family.

It catalyses the reaction (6R)-10-formyltetrahydrofolate + 5-amino-1-(5-phospho-beta-D-ribosyl)imidazole-4-carboxamide = 5-formamido-1-(5-phospho-D-ribosyl)imidazole-4-carboxamide + (6S)-5,6,7,8-tetrahydrofolate. The enzyme catalyses IMP + H2O = 5-formamido-1-(5-phospho-D-ribosyl)imidazole-4-carboxamide. The protein operates within purine metabolism; IMP biosynthesis via de novo pathway; 5-formamido-1-(5-phospho-D-ribosyl)imidazole-4-carboxamide from 5-amino-1-(5-phospho-D-ribosyl)imidazole-4-carboxamide (10-formyl THF route): step 1/1. Its pathway is purine metabolism; IMP biosynthesis via de novo pathway; IMP from 5-formamido-1-(5-phospho-D-ribosyl)imidazole-4-carboxamide: step 1/1. The polypeptide is Bifunctional purine biosynthesis protein PurH (Brucella anthropi (strain ATCC 49188 / DSM 6882 / CCUG 24695 / JCM 21032 / LMG 3331 / NBRC 15819 / NCTC 12168 / Alc 37) (Ochrobactrum anthropi)).